Reading from the N-terminus, the 155-residue chain is Mediator of RNA polymerase II transcription subunit 21 (155 aa).

The segment at 29-73 (QAPPSVPPGQHRVDTMPEIKGKAASENPQSNPPQPAEPPVPEKIS) is disordered. The span at 39 to 51 (HRVDTMPEIKGKA) shows a compositional bias: basic and acidic residues. Over residues 58 to 69 (SNPPQPAEPPVP) the composition is skewed to pro residues. The stretch at 75–147 (EQFNQDLKEF…EVLLKKVEDK (73 aa)) forms a coiled coil.

Belongs to the Mediator complex subunit 21 family. In terms of assembly, component of the Mediator complex.

The protein resides in the nucleus. Its function is as follows. Component of the Mediator complex, a coactivator involved in the regulated transcription of nearly all RNA polymerase II-dependent genes. Mediator functions as a bridge to convey information from gene-specific regulatory proteins to the basal RNA polymerase II transcription machinery. Mediator is recruited to promoters by direct interactions with regulatory proteins and serves as a scaffold for the assembly of a functional preinitiation complex with RNA polymerase II and the general transcription factors. The protein is Mediator of RNA polymerase II transcription subunit 21 (SRB7) of Phaeosphaeria nodorum (strain SN15 / ATCC MYA-4574 / FGSC 10173) (Glume blotch fungus).